The sequence spans 430 residues: Leucoanthocyanidin dioxygenase (430 aa).

One can recognise a Fe2OG dioxygenase domain in the interval leucine 212–proline 311. 3 residues coordinate Fe cation: histidine 236, aspartate 238, and histidine 292. Composition is skewed to basic and acidic residues over residues lysine 376–glycine 407 and lysine 415–lysine 430. A disordered region spans residues lysine 376–lysine 430.

Belongs to the iron/ascorbate-dependent oxidoreductase family. It depends on Fe cation as a cofactor. L-ascorbate serves as cofactor. In terms of tissue distribution, predominantly expressed in corollas and at lower levels in anthers.

It carries out the reaction a (2R,3S,4S)-leucoanthocyanidin + 2-oxoglutarate + O2 = a 4-H-anthocyanidin with a 3-hydroxy group + succinate + CO2 + 2 H2O. It participates in pigment biosynthesis; anthocyanin biosynthesis. Oxidation of leucoanthocyanidins into anthocyanidins. In Petunia hybrida (Petunia), this protein is Leucoanthocyanidin dioxygenase (ANT17).